Consider the following 116-residue polypeptide: Venom nerve growth factor (116 aa).

Cystine bridges form between Cys14-Cys78, Cys56-Cys106, and Cys66-Cys108.

The protein belongs to the NGF-beta family. Homodimer; non-covalently linked. Post-translationally, not glycosylated. Expressed by the venom gland.

It localises to the secreted. In terms of biological role, nerve growth factor is important for the development and maintenance of the sympathetic and sensory nervous systems. It stimulates division and differentiation of sympathetic and embryonic sensory neurons as well as basal forebrain cholinergic neurons in the brain. Its relevance in the snake venom is not clear. However, it has been shown to inhibit metalloproteinase-dependent proteolysis of platelet glycoprotein Ib alpha, suggesting a metalloproteinase inhibition to prevent metalloprotease autodigestion and/or protection against prey proteases. Binds a lipid between the two protein chains in the homodimer. The lipid-bound form promotes histamine relase from mouse mast cells, contrary to the lipid-free form. The sequence is that of Venom nerve growth factor from Naja naja (Indian cobra).